We begin with the raw amino-acid sequence, 248 residues long: Aspartate/glutamate leucyltransferase (248 aa).

It belongs to the R-transferase family. Bpt subfamily.

It localises to the cytoplasm. The catalysed reaction is N-terminal L-glutamyl-[protein] + L-leucyl-tRNA(Leu) = N-terminal L-leucyl-L-glutamyl-[protein] + tRNA(Leu) + H(+). The enzyme catalyses N-terminal L-aspartyl-[protein] + L-leucyl-tRNA(Leu) = N-terminal L-leucyl-L-aspartyl-[protein] + tRNA(Leu) + H(+). In terms of biological role, functions in the N-end rule pathway of protein degradation where it conjugates Leu from its aminoacyl-tRNA to the N-termini of proteins containing an N-terminal aspartate or glutamate. This Polynucleobacter asymbioticus (strain DSM 18221 / CIP 109841 / QLW-P1DMWA-1) (Polynucleobacter necessarius subsp. asymbioticus) protein is Aspartate/glutamate leucyltransferase.